Here is a 132-residue protein sequence, read N- to C-terminus: Small ribosomal subunit protein uS8c (132 aa).

It belongs to the universal ribosomal protein uS8 family. As to quaternary structure, part of the 30S ribosomal subunit.

The protein localises to the plastid. It localises to the chloroplast. In terms of biological role, one of the primary rRNA binding proteins, it binds directly to 16S rRNA central domain where it helps coordinate assembly of the platform of the 30S subunit. The polypeptide is Small ribosomal subunit protein uS8c (rps8) (Nymphaea alba (White water-lily)).